The following is a 926-amino-acid chain: Bifunctional uridylyltransferase/uridylyl-removing enzyme (926 aa).

Residues 1 to 379 (MPVSFLSLAS…PKSRRSGASK (379 aa)) form a uridylyltransferase region. The interval 380-736 (QIDGFPVIQG…GHEMPAYDAT (357 aa)) is uridylyl-removing. In terms of domain architecture, HD spans 496–618 (VDEHAIRALD…VKSPERLRLL (123 aa)). ACT domains are found at residues 737–814 (MISL…IRSS) and 849–926 (VIEV…ISEK).

This sequence belongs to the GlnD family. It depends on Mg(2+) as a cofactor.

It carries out the reaction [protein-PII]-L-tyrosine + UTP = [protein-PII]-uridylyl-L-tyrosine + diphosphate. It catalyses the reaction [protein-PII]-uridylyl-L-tyrosine + H2O = [protein-PII]-L-tyrosine + UMP + H(+). Its activity is regulated as follows. Uridylyltransferase (UTase) activity is inhibited by glutamine, while glutamine activates uridylyl-removing (UR) activity. Functionally, modifies, by uridylylation and deuridylylation, the PII regulatory proteins (GlnB and homologs), in response to the nitrogen status of the cell that GlnD senses through the glutamine level. Under low glutamine levels, catalyzes the conversion of the PII proteins and UTP to PII-UMP and PPi, while under higher glutamine levels, GlnD hydrolyzes PII-UMP to PII and UMP (deuridylylation). Thus, controls uridylylation state and activity of the PII proteins, and plays an important role in the regulation of nitrogen assimilation and metabolism. This chain is Bifunctional uridylyltransferase/uridylyl-removing enzyme, found in Zymomonas mobilis subsp. mobilis (strain ATCC 31821 / ZM4 / CP4).